A 525-amino-acid polypeptide reads, in one-letter code: MSFNIKEISEMIEKQIRNYNKEVVQTEQGTVVSVGDGIALIYGLDNAIMGELLLFSNNVYGMVLNLEEGAVGSVILGDETLIREGDIVKRTNKVVETPVGDALLGRVIDALGQPIDNLGPIDFTKTRPVERVATSVMARKSVSQPLETGILAIDSAIPIGKGQRELIIGDRQTGKTAIAIDAIINQKNRNVKCIYVAIGQKDSTIVQVVEKFKKYGAMDYTVVVNAGASQPASLQYLSPYTGITIAEEWMESGNDVLIVYDDLTKHAVSYREMSLLLRRPPGREAYPGDVFYLHSRLLERAARVNENYGGGSITALPIIETQAGDISAYIPTNVISITDGQIFLSSELFNQGVRPAVDIGPSVSRVGSAAQIKSIKQVSGTLKLELAQYYELESFAKFGSDLDETTKATLDQGAKIIQMLIQKQFNPLEQVDQAILLLTIKSHLLKWLPLDSIYNFKHEILSHFKNDQQAAKLRKKLDEQKTFDDQLQKEILKQAQKVVLKITKNIKEYKPEAFGNITEYQNLGK.

169-176 (GDRQTGKT) is a binding site for ATP.

Belongs to the ATPase alpha/beta chains family. In terms of assembly, F-type ATPases have 2 components, CF(1) - the catalytic core - and CF(0) - the membrane proton channel. CF(1) has five subunits: alpha(3), beta(3), gamma(1), delta(1), epsilon(1). CF(0) has three main subunits: a(1), b(2) and c(9-12). The alpha and beta chains form an alternating ring which encloses part of the gamma chain. CF(1) is attached to CF(0) by a central stalk formed by the gamma and epsilon chains, while a peripheral stalk is formed by the delta and b chains.

The protein resides in the cell membrane. The enzyme catalyses ATP + H2O + 4 H(+)(in) = ADP + phosphate + 5 H(+)(out). Its function is as follows. Produces ATP from ADP in the presence of a proton gradient across the membrane. The alpha chain is a regulatory subunit. In Mycoplasma capricolum subsp. capricolum (strain California kid / ATCC 27343 / NCTC 10154), this protein is ATP synthase subunit alpha.